A 317-amino-acid chain; its full sequence is Methionyl-tRNA formyltransferase (317 aa).

(6S)-5,6,7,8-tetrahydrofolate is bound at residue 110–113 (SLLP).

The protein belongs to the Fmt family.

The catalysed reaction is L-methionyl-tRNA(fMet) + (6R)-10-formyltetrahydrofolate = N-formyl-L-methionyl-tRNA(fMet) + (6S)-5,6,7,8-tetrahydrofolate + H(+). Its function is as follows. Attaches a formyl group to the free amino group of methionyl-tRNA(fMet). The formyl group appears to play a dual role in the initiator identity of N-formylmethionyl-tRNA by promoting its recognition by IF2 and preventing the misappropriation of this tRNA by the elongation apparatus. The sequence is that of Methionyl-tRNA formyltransferase from Bacillus subtilis (strain 168).